Here is a 360-residue protein sequence, read N- to C-terminus: Archaemetzincin-2 (360 aa).

H254 is a Zn(2+) binding site. E255 functions as the Proton acceptor in the catalytic mechanism. Zn(2+) contacts are provided by H258, H264, C265, C270, C289, and C292.

This sequence belongs to the peptidase M54 family. It depends on Zn(2+) as a cofactor.

Probable zinc metalloprotease. The protein is Archaemetzincin-2 (AMZ2) of Macaca fascicularis (Crab-eating macaque).